Here is a 479-residue protein sequence, read N- to C-terminus: UDP-N-acetylmuramoyl-L-alanyl-D-glutamate--2,6-diaminopimelate ligase (479 aa).

Ser21 serves as a coordination point for UDP-N-acetyl-alpha-D-muramoyl-L-alanyl-D-glutamate. 98–104 (GTNGKSS) is a binding site for ATP. UDP-N-acetyl-alpha-D-muramoyl-L-alanyl-D-glutamate is bound by residues 144 to 145 (TT), Ser171, Gln177, and Arg179. Position 211 is an N6-carboxylysine (Lys211). Meso-2,6-diaminopimelate contacts are provided by residues Arg372, 396–399 (DNPR), Gly446, and Glu450. The Meso-diaminopimelate recognition motif signature appears at 396-399 (DNPR).

It belongs to the MurCDEF family. MurE subfamily. Mg(2+) is required as a cofactor. Carboxylation is probably crucial for Mg(2+) binding and, consequently, for the gamma-phosphate positioning of ATP.

The protein localises to the cytoplasm. The catalysed reaction is UDP-N-acetyl-alpha-D-muramoyl-L-alanyl-D-glutamate + meso-2,6-diaminopimelate + ATP = UDP-N-acetyl-alpha-D-muramoyl-L-alanyl-gamma-D-glutamyl-meso-2,6-diaminopimelate + ADP + phosphate + H(+). It functions in the pathway cell wall biogenesis; peptidoglycan biosynthesis. Functionally, catalyzes the addition of meso-diaminopimelic acid to the nucleotide precursor UDP-N-acetylmuramoyl-L-alanyl-D-glutamate (UMAG) in the biosynthesis of bacterial cell-wall peptidoglycan. This is UDP-N-acetylmuramoyl-L-alanyl-D-glutamate--2,6-diaminopimelate ligase from Rickettsia rickettsii.